The sequence spans 196 residues: UPF0319 protein VV1_0237 (196 aa).

A signal peptide spans 1–19 (MKKMMILSALALFSSSLFA).

The protein belongs to the UPF0319 family.

This Vibrio vulnificus (strain CMCP6) protein is UPF0319 protein VV1_0237.